Reading from the N-terminus, the 502-residue chain is NADH-quinone oxidoreductase subunit N (502 aa).

The next 14 membrane-spanning stretches (helical) occupy residues 16–36 (TLVP…IDLF), 47–67 (MLSL…AGVF), 85–105 (LAIL…PLAL), 113–133 (FSYP…QFMV), 138–158 (LILI…LIAM), 172–192 (FTMG…FYAL), 213–233 (IGFV…KLSM), 248–268 (SAAL…IVAM), 273–293 (FLIH…VVVT), 310–330 (MLAY…LIGT), 337–357 (LFLY…MLWI), 387–407 (ASIM…ALFW), 410–430 (MYLM…IMAL), and 470–490 (TIIG…NQLI).

The protein belongs to the complex I subunit 2 family. NDH-1 is composed of 14 different subunits. Subunits NuoA, H, J, K, L, M, N constitute the membrane sector of the complex.

Its subcellular location is the cell inner membrane. It catalyses the reaction a quinone + NADH + 5 H(+)(in) = a quinol + NAD(+) + 4 H(+)(out). Functionally, NDH-1 shuttles electrons from NADH, via FMN and iron-sulfur (Fe-S) centers, to quinones in the respiratory chain. The immediate electron acceptor for the enzyme in this species is believed to be ubiquinone. Couples the redox reaction to proton translocation (for every two electrons transferred, four hydrogen ions are translocated across the cytoplasmic membrane), and thus conserves the redox energy in a proton gradient. This Sulfurimonas denitrificans (strain ATCC 33889 / DSM 1251) (Thiomicrospira denitrificans (strain ATCC 33889 / DSM 1251)) protein is NADH-quinone oxidoreductase subunit N.